Reading from the N-terminus, the 453-residue chain is F-box protein SKIP14 (453 aa).

Positions 34 to 104 (RKNTGGDASS…NRQQLFAGLS (71 aa)) constitute an F-box; degenerate domain.

Part of a SCF (ASK-cullin-F-box) protein ligase complex. Interacts with CUL1, SKP1A/ASK1 and SPK1B/ASK2.

The protein operates within protein modification; protein ubiquitination. Component of SCF(ASK-cullin-F-box) E3 ubiquitin ligase complexes, which may mediate the ubiquitination and subsequent proteasomal degradation of target proteins. In Arabidopsis thaliana (Mouse-ear cress), this protein is F-box protein SKIP14 (SKIP14).